Reading from the N-terminus, the 239-residue chain is Probable methylthioribulose-1-phosphate dehydratase (239 aa).

Cys100 is a binding site for substrate. Zn(2+) contacts are provided by His118 and His120. Catalysis depends on Glu141, which acts as the Proton donor/acceptor. His197 lines the Zn(2+) pocket.

This sequence belongs to the aldolase class II family. MtnB subfamily. Requires Zn(2+) as cofactor.

It is found in the cytoplasm. It carries out the reaction 5-(methylsulfanyl)-D-ribulose 1-phosphate = 5-methylsulfanyl-2,3-dioxopentyl phosphate + H2O. The protein operates within amino-acid biosynthesis; L-methionine biosynthesis via salvage pathway; L-methionine from S-methyl-5-thio-alpha-D-ribose 1-phosphate: step 2/6. Functionally, catalyzes the dehydration of methylthioribulose-1-phosphate (MTRu-1-P) into 2,3-diketo-5-methylthiopentyl-1-phosphate (DK-MTP-1-P). This Leishmania major protein is Probable methylthioribulose-1-phosphate dehydratase.